A 156-amino-acid chain; its full sequence is Biotin carboxyl carrier protein of acetyl-CoA carboxylase (156 aa).

In terms of domain architecture, Biotinyl-binding spans 80–156 (GNVVRSPMVG…EFDQPLFTIV (77 aa)). At K122 the chain carries N6-biotinyllysine.

In terms of assembly, homodimer.

It participates in lipid metabolism; fatty acid biosynthesis. In terms of biological role, this protein is a component of the acetyl coenzyme A carboxylase complex; first, biotin carboxylase catalyzes the carboxylation of the carrier protein and then the transcarboxylase transfers the carboxyl group to form malonyl-CoA. The polypeptide is Biotin carboxyl carrier protein of acetyl-CoA carboxylase (accB) (Pseudomonas aeruginosa (strain ATCC 15692 / DSM 22644 / CIP 104116 / JCM 14847 / LMG 12228 / 1C / PRS 101 / PAO1)).